A 108-amino-acid polypeptide reads, in one-letter code: Small ribosomal subunit protein bS16 (108 aa).

The tract at residues 82-108 (ESKFSKNTQTENKKPVSKKTTKKSKDN) is disordered. Basic residues predominate over residues 96–108 (PVSKKTTKKSKDN).

The protein belongs to the bacterial ribosomal protein bS16 family.

In Mycoplasma mycoides subsp. mycoides SC (strain CCUG 32753 / NCTC 10114 / PG1), this protein is Small ribosomal subunit protein bS16.